The chain runs to 252 residues: MTKVILSGCSGKMGKMISQSVNNFEGLSIVAGIDKFKDESLKYPIFENITECDVNADVVLDFSRPDALDSLLSYSKDNNLPVVLCTTGYSKEQLDKIDEYSKIVPVFHSANMSIGINLINNILKDISAMLYENYDIEIIEKHHNQKVDAPSGTALLLGNTIKDSIKEDTVFNKGRNGIKKREKNEIGIHAIRGGSIVGEHEVIFAGAGEIIELKHTALSREVFAMGALKACEYMAGKNNGLYTMDDVIKSKN.

Residues 8–13, 85–87, and 109–112 contribute to the NAD(+) site; these read GCSGKM, CTT, and SANM. The Proton donor/acceptor role is filled by histidine 142. Histidine 143 provides a ligand contact to (S)-2,3,4,5-tetrahydrodipicolinate. The active-site Proton donor is lysine 146. 152 to 153 is a binding site for (S)-2,3,4,5-tetrahydrodipicolinate; it reads GT.

The protein belongs to the DapB family.

It localises to the cytoplasm. It carries out the reaction (S)-2,3,4,5-tetrahydrodipicolinate + NAD(+) + H2O = (2S,4S)-4-hydroxy-2,3,4,5-tetrahydrodipicolinate + NADH + H(+). The enzyme catalyses (S)-2,3,4,5-tetrahydrodipicolinate + NADP(+) + H2O = (2S,4S)-4-hydroxy-2,3,4,5-tetrahydrodipicolinate + NADPH + H(+). It participates in amino-acid biosynthesis; L-lysine biosynthesis via DAP pathway; (S)-tetrahydrodipicolinate from L-aspartate: step 4/4. In terms of biological role, catalyzes the conversion of 4-hydroxy-tetrahydrodipicolinate (HTPA) to tetrahydrodipicolinate. The protein is 4-hydroxy-tetrahydrodipicolinate reductase of Clostridium novyi (strain NT).